Reading from the N-terminus, the 306-residue chain is tRNA-cytidine(32) 2-sulfurtransferase (306 aa).

A PP-loop motif motif is present at residues 49–54 (SGGKDS). [4Fe-4S] cluster is bound by residues cysteine 124, cysteine 127, and cysteine 215.

The protein belongs to the TtcA family. In terms of assembly, homodimer. Mg(2+) is required as a cofactor. [4Fe-4S] cluster serves as cofactor.

It localises to the cytoplasm. It catalyses the reaction cytidine(32) in tRNA + S-sulfanyl-L-cysteinyl-[cysteine desulfurase] + AH2 + ATP = 2-thiocytidine(32) in tRNA + L-cysteinyl-[cysteine desulfurase] + A + AMP + diphosphate + H(+). Its pathway is tRNA modification. Its function is as follows. Catalyzes the ATP-dependent 2-thiolation of cytidine in position 32 of tRNA, to form 2-thiocytidine (s(2)C32). The sulfur atoms are provided by the cysteine/cysteine desulfurase (IscS) system. The sequence is that of tRNA-cytidine(32) 2-sulfurtransferase from Azoarcus sp. (strain BH72).